Consider the following 231-residue polypeptide: Large ribosomal subunit protein uL1 (231 aa).

Belongs to the universal ribosomal protein uL1 family. Part of the 50S ribosomal subunit.

In terms of biological role, binds directly to 23S rRNA. The L1 stalk is quite mobile in the ribosome, and is involved in E site tRNA release. Its function is as follows. Protein L1 is also a translational repressor protein, it controls the translation of the L11 operon by binding to its mRNA. This Legionella pneumophila (strain Paris) protein is Large ribosomal subunit protein uL1.